Reading from the N-terminus, the 517-residue chain is Recombining binding protein suppressor of hairless-like protein (517 aa).

Over residues 26-37 (EMQLQSEADRRS) the composition is skewed to basic and acidic residues. A disordered region spans residues 26 to 48 (EMQLQSEADRRSLPGTWTRSSPE). DNA-binding stretches follow at residues 78-88 (QKSYGNEKRFF), 193-198 (SKPSQK), and 220-225 (RLRSQT). The IPT/TIG domain maps to 387 to 512 (LISTLELSGG…HQEFTRTNFH (126 aa)).

The protein belongs to the Su(H) family. As to quaternary structure, interacts weakly with EBNA2. Does not interact with any Notch proteins.

The protein resides in the nucleus. In terms of biological role, putative transcription factor, which cooperates with EBNA2 to activate transcription. The protein is Recombining binding protein suppressor of hairless-like protein (RBPJL) of Homo sapiens (Human).